A 619-amino-acid chain; its full sequence is 4-hydroxyphenylalkanoate adenylyltransferase (619 aa).

Belongs to the ATP-dependent AMP-binding enzyme family.

It carries out the reaction 17-(4-hydroxyphenyl)heptadecanoate + holo-[(phenol)carboxyphthiodiolenone synthase] + ATP = 17-(4-hydroxyphenyl)heptadecanoyl-[(phenol)carboxyphthiodiolenone synthase] + AMP + diphosphate. It catalyses the reaction 19-(4-hydroxyphenyl)nonadecanoate + holo-[(phenol)carboxyphthiodiolenone synthase] + ATP = 19-(4-hydroxyphenyl)nonadecanoyl-[(phenol)carboxyphthiodiolenone synthase] + AMP + diphosphate. The enzyme catalyses dodecanoate + ATP + H(+) = dodecanoyl-AMP + diphosphate. It functions in the pathway lipid metabolism; fatty acid biosynthesis. In terms of biological role, catalyzes the activation of long-chain fatty acids as acyl-adenylates (acyl-AMP), which are then transferred to the multifunctional polyketide synthase PpsA for further chain extension. Involved in the biosynthesis of phenolphthiocerol, which is an important intermediate in the biosynthesis of phenolic glycolipid (PGL), also called mycosid B. In Mycobacterium tuberculosis (strain ATCC 25618 / H37Rv), this protein is 4-hydroxyphenylalkanoate adenylyltransferase (fadD29).